The primary structure comprises 807 residues: MSKLSFRARALDAAKPLPIYRGKDMPDLNDCVSINRAVPQMPTGMEKEEESEHHLQRAISAQQVFREKKESMVIPVPEAESNVNYYNRLYKGEFKQPKQFIHIQPFNLDNEQPDYDMDSEDETLLNRLNRKMEIKPLQFEIMIDRLEKASSNQLVTLQEAKLLLNEDDYLIKAVYDYWVRKRKNCRGPSLIPQIKQEKRDGSTNNDPYVAFRRRTEKMQTRKNRKNDEASYEKMLKLRREFSRAITILEMIKRREKTKRELLHLTLEVVEKRYHLGDYGGEILNEVKISRSEKELYATPATLHNGNHHKVQECKTKHPHHLSLKEEASDVVRQKKKYPKKPKAEALITSQQPTPETLPVINKSDIKQYDFHSSDEDEFPQVLSPVSEPEEENDPDGPCAFRRRAGCQYYAPRLDQANHSCENSELADLDKLRYRHCLTTLTVPRRCIGFARRRIGRGGRVIMDRISTEHDPVLKQIDPEMLNSFSSSSQTIDFSSNFSRTNASSKHCENRLSLSEILSNIRSCRLQCFQPRLLNLQDSDSEECTSRKPGQTVNNKRVSAASVALLNTSKNGISVTGGITEEQFQTHQQQLVQMQRQQLAQLQQKQQSQHSSQQTHPKAQGSSTSDCMSKTLDSASAHFAASAVVSAPVPSRSEVAKEQNTGHNNINGVVQPSGTSKTLYSTNMALSSSPGISAVQLVRTVGHTTTNHLIPALCTSSPQTLPMNNSCLTNAVHLNNVSVVSPVNVHINTRTSAPSPTALKLATVAASMDRVPKVTPSSAISSIARENHEPERLGLNGIAETTVAMEVT.

Glycyl lysine isopeptide (Lys-Gly) (interchain with G-Cter in SUMO2) cross-links involve residues lysine 135, lysine 195, lysine 324, and lysine 362. Residues 376–396 are disordered; sequence DEFPQVLSPVSEPEEENDPDG. Serine 538 carries the post-translational modification Phosphoserine. Residues 600 to 613 are compositionally biased toward low complexity; it reads QLQQKQQSQHSSQQ. Disordered stretches follow at residues 600–628 and 645–673; these read QLQQ…DCMS and SAPV…QPSG. Polar residues-rich tracts occupy residues 614–628 and 657–673; these read THPK…DCMS and EQNT…QPSG. Serine 754 carries the post-translational modification Phosphoserine.

It belongs to the enhancer of polycomb family.

The protein localises to the nucleus. Its function is as follows. May play a role in transcription or DNA repair. This Homo sapiens (Human) protein is Enhancer of polycomb homolog 2 (EPC2).